A 309-amino-acid polypeptide reads, in one-letter code: Major capsid protein (309 aa).

Residues 64–83 (PNEVEFSATDETSSTEDHGL) are disordered.

As to quaternary structure, multimerizes.

It is found in the virion. Functionally, probably the major capsid protein. This Pseudomonas phage JBD67 protein is Major capsid protein.